We begin with the raw amino-acid sequence, 299 residues long: Protoheme IX farnesyltransferase (299 aa).

9 consecutive transmembrane segments (helical) span residues 27–47, 53–73, 97–117, 121–141, 149–169, 175–195, 222–242, 244–264, and 273–293; these read VVALMLLTSVVGMSLAPHEHF, LIALVGIALMAGSAAAFNHLI, FNVLLFALLIGSLGFLSLMLW, LTAYLTFASLLGYAVVYTLYL, IVIAGIAGAMPPLLGWTSITG, AWLLVMIIFIWTPPHFWALAI, ILLYAILLALVCMLPVLVGMA, YLYLFSALVLNVCFVRYAIKL, and AIEMFRFSIYFLLLLFCALLL.

Belongs to the UbiA prenyltransferase family. Protoheme IX farnesyltransferase subfamily.

The protein localises to the cell inner membrane. It catalyses the reaction heme b + (2E,6E)-farnesyl diphosphate + H2O = Fe(II)-heme o + diphosphate. It functions in the pathway porphyrin-containing compound metabolism; heme O biosynthesis; heme O from protoheme: step 1/1. In terms of biological role, converts heme B (protoheme IX) to heme O by substitution of the vinyl group on carbon 2 of heme B porphyrin ring with a hydroxyethyl farnesyl side group. The chain is Protoheme IX farnesyltransferase from Vibrio vulnificus (strain YJ016).